A 511-amino-acid polypeptide reads, in one-letter code: Ribose import ATP-binding protein RbsA (511 aa).

2 ABC transporter domains span residues Val-13–Ala-249 and Ala-260–Ala-503. ATP is bound at residue Gly-45 to Ser-52.

This sequence belongs to the ABC transporter superfamily. Ribose importer (TC 3.A.1.2.1) family. The complex is composed of an ATP-binding protein (RbsA), two transmembrane proteins (RbsC) and a solute-binding protein (RbsB).

The protein localises to the cell inner membrane. It carries out the reaction D-ribose(out) + ATP + H2O = D-ribose(in) + ADP + phosphate + H(+). Functionally, part of the ABC transporter complex RbsABC involved in ribose import. Responsible for energy coupling to the transport system. This Roseobacter denitrificans (strain ATCC 33942 / OCh 114) (Erythrobacter sp. (strain OCh 114)) protein is Ribose import ATP-binding protein RbsA.